Consider the following 246-residue polypeptide: Probable hydroxyethylthiazole kinase (246 aa).

M50 lines the substrate pocket. ATP is bound by residues R125 and T145. Residue G172 participates in substrate binding.

This sequence belongs to the Thz kinase family. Requires Mg(2+) as cofactor.

It catalyses the reaction 5-(2-hydroxyethyl)-4-methylthiazole + ATP = 4-methyl-5-(2-phosphooxyethyl)-thiazole + ADP + H(+). It participates in cofactor biosynthesis; thiamine diphosphate biosynthesis; 4-methyl-5-(2-phosphoethyl)-thiazole from 5-(2-hydroxyethyl)-4-methylthiazole: step 1/1. Functionally, catalyzes the phosphorylation of the hydroxyl group of 4-methyl-5-beta-hydroxyethylthiazole (THZ). The protein is Probable hydroxyethylthiazole kinase (thiM) of Agrobacterium fabrum (strain C58 / ATCC 33970) (Agrobacterium tumefaciens (strain C58)).